A 174-amino-acid chain; its full sequence is Mitochondrial holo-[acyl-carrier-protein] synthase (174 aa).

This sequence belongs to the P-Pant transferase superfamily. AcpS family.

It localises to the mitochondrion. The catalysed reaction is apo-[ACP] + CoA = holo-[ACP] + adenosine 3',5'-bisphosphate + H(+). In terms of biological role, transfers the 4'-phosphopantetheine moiety from coenzyme A to a Ser of mitochondrial acyl-carrier-protein. The protein is Mitochondrial holo-[acyl-carrier-protein] synthase (PPT2) of Eremothecium gossypii (strain ATCC 10895 / CBS 109.51 / FGSC 9923 / NRRL Y-1056) (Yeast).